The primary structure comprises 92 residues: Large ribosomal subunit protein bL25 (92 aa).

Belongs to the bacterial ribosomal protein bL25 family. As to quaternary structure, part of the 50S ribosomal subunit; part of the 5S rRNA/L5/L18/L25 subcomplex. Contacts the 5S rRNA. Binds to the 5S rRNA independently of L5 and L18.

Functionally, this is one of the proteins that binds to the 5S RNA in the ribosome where it forms part of the central protuberance. In Vibrio campbellii (strain ATCC BAA-1116), this protein is Large ribosomal subunit protein bL25.